Consider the following 118-residue polypeptide: Large ribosomal subunit protein uL18 (118 aa).

The segment at 1–22 (MISKPDKNKLRQKRHRRVRGKL) is disordered. The span at 10-20 (LRQKRHRRVRG) shows a compositional bias: basic residues.

The protein belongs to the universal ribosomal protein uL18 family. As to quaternary structure, part of the 50S ribosomal subunit; part of the 5S rRNA/L5/L18/L25 subcomplex. Contacts the 5S and 23S rRNAs.

Functionally, this is one of the proteins that bind and probably mediate the attachment of the 5S RNA into the large ribosomal subunit, where it forms part of the central protuberance. This Streptococcus thermophilus (strain ATCC BAA-491 / LMD-9) protein is Large ribosomal subunit protein uL18.